The primary structure comprises 216 residues: MPIGPPPPEKMMFQLSLRRRGISDQAVLRAMDEVPRDAFVEPGQRAEAWLDTALPIACGQTISQPFVVAYMTEQMQLRPEHRVLEIGTGSGYQAAILSRLSRAVLTLERFKTLADQARARLAALHCDNVEVRIGDGFAVPADAGLFDRIIVTAAMEEVPASLLDRLDLDGVLIAPVGPHNATQTLLRIRKSKSGIERKELVAVRFVPALPGLAREL.

Ser-63 is an active-site residue.

It belongs to the methyltransferase superfamily. L-isoaspartyl/D-aspartyl protein methyltransferase family.

The protein localises to the cytoplasm. The catalysed reaction is [protein]-L-isoaspartate + S-adenosyl-L-methionine = [protein]-L-isoaspartate alpha-methyl ester + S-adenosyl-L-homocysteine. Its function is as follows. Catalyzes the methyl esterification of L-isoaspartyl residues in peptides and proteins that result from spontaneous decomposition of normal L-aspartyl and L-asparaginyl residues. It plays a role in the repair and/or degradation of damaged proteins. This chain is Protein-L-isoaspartate O-methyltransferase, found in Rhodopseudomonas palustris (strain BisB18).